Here is a 460-residue protein sequence, read N- to C-terminus: Malonyl-coenzyme A:anthocyanin 3-O-glucoside-6''-O-malonyltransferase (460 aa).

Active-site proton acceptor residues include H173 and D400.

Belongs to the plant acyltransferase family.

It carries out the reaction an anthocyanidin 3-O-beta-D-glucoside + malonyl-CoA = an anthocyanidin 3-O-(6-O-malonyl-beta-D-glucoside) + CoA. Its activity is regulated as follows. Completely inhibited by 5 mM N-ethylmaleimide or 0.1 mM Cu(2+). Partially inhibited by 0.1 mM Fe(2+) or 0.1 mM Hg(2+). Its function is as follows. Catalyzes the transfer of the malonyl group from malonyl-CoA to pelargonidin 3-O-glucoside to produce pelargonidin 3-O-6''-O-malonylglucoside. Can also transfer the malonyl group from malonyl-CoA to cyanidin 3-O-glucoside, delphinidin 3-O-glucoside and quercetin 3-O-glucoside. This Dahlia pinnata (Pinnate dahlia) protein is Malonyl-coenzyme A:anthocyanin 3-O-glucoside-6''-O-malonyltransferase.